Here is a 79-residue protein sequence, read N- to C-terminus: Acyl carrier protein (79 aa).

In terms of domain architecture, Carrier spans 3 to 78 (QEILEKVCSI…DAVKFIEEKK (76 aa)). An O-(pantetheine 4'-phosphoryl)serine modification is found at serine 38.

This sequence belongs to the acyl carrier protein (ACP) family. Post-translationally, 4'-phosphopantetheine is transferred from CoA to a specific serine of apo-ACP by AcpS. This modification is essential for activity because fatty acids are bound in thioester linkage to the sulfhydryl of the prosthetic group.

The protein resides in the cytoplasm. It participates in lipid metabolism; fatty acid biosynthesis. Its function is as follows. Carrier of the growing fatty acid chain in fatty acid biosynthesis. The protein is Acyl carrier protein of Prochlorococcus marinus (strain MIT 9312).